We begin with the raw amino-acid sequence, 799 residues long: MFGFGIRQLRGYASKTDLSKIRNIGIIAHIDAGKTTTTERMLYYSGKTNRIGNVDQGDTVTDYLPQERSRGITIQSAAISFNWQNDHRINLIDTPGHVDFTFEVIKSLKVLDGCVTILDAVAGVEAQTEKVWKQSYGIPKICYINKMDRVGSGYSRTVKELMIKMNQRVVLANMPLFKLDPVTNEQVFEGVLDVVNMKALRWDSTDVNKVDIADIDKFDSSLLDELTKAREAMVETLSEFDENLVEHFLEDAEGDYLKVSPTILNSSIRKSTLSQDITPILCGSSFRNIGVQPLLDAVVNYLPSPLEAKFPELNEDIPISYDKRKGLLFDNNSEICVAFAFKVITDEIRGQLVFVRVYSGTLKNGHSVYNSTNGKTFKINKPVIMHANKTEDVQSLSAGEIGVLTGSTVFGRIETGDTLISHSMVKDGLKSIERKGNLNLKINPIIIPPPVFSVYIEPKTLGNRKAMEAALKILVTEDPSLHVSQDEETSQTLLSGMGELHLEIARDKLLNDLKAEVGIGKLMISYKETINSTTNPVIYQDDIGYKFTIQIEPLEGEEVRVDKDTATEAWYPLGVDNNYLIFEKSNKPGLGAVWKHQIPYDVVINTIKSSCLASFQRGGKIGGYALHSCAVRIKGDFEVPYDATSSNEILNITRKLIIKSLQALHESSYSLLEPIMDVEIVVNQKFMGEVIQDLTGHHKANILSIEDEHGLDYNNERSTLNFKDIVDSQYLPPDITLNLAKLDNGGDRCKVIKAEAPLKEMVSYSNKLRSLTEGRGMVYMNYHGMKKVTPERLDDVLQG.

The tr-type G domain maps to 19–306; that stretch reads SKIRNIGIIA…AVVNYLPSPL (288 aa). GTP is bound by residues 28-35, 93-97, and 145-148; these read AHIDAGKT, DTPGH, and NKMD.

The protein belongs to the TRAFAC class translation factor GTPase superfamily. Classic translation factor GTPase family. EF-G/EF-2 subfamily.

It is found in the mitochondrion. In terms of biological role, mitochondrial GTPase that mediates the disassembly of ribosomes from messenger RNA at the termination of mitochondrial protein biosynthesis. Not involved in the GTP-dependent ribosomal translocation step during translation elongation. The polypeptide is Ribosome-releasing factor 2, mitochondrial (Vanderwaltozyma polyspora (strain ATCC 22028 / DSM 70294 / BCRC 21397 / CBS 2163 / NBRC 10782 / NRRL Y-8283 / UCD 57-17) (Kluyveromyces polysporus)).